The primary structure comprises 250 residues: Leucyl/phenylalanyl-tRNA--protein transferase (250 aa).

The tract at residues M1–A21 is disordered.

Belongs to the L/F-transferase family.

The protein localises to the cytoplasm. It catalyses the reaction N-terminal L-lysyl-[protein] + L-leucyl-tRNA(Leu) = N-terminal L-leucyl-L-lysyl-[protein] + tRNA(Leu) + H(+). The catalysed reaction is N-terminal L-arginyl-[protein] + L-leucyl-tRNA(Leu) = N-terminal L-leucyl-L-arginyl-[protein] + tRNA(Leu) + H(+). It carries out the reaction L-phenylalanyl-tRNA(Phe) + an N-terminal L-alpha-aminoacyl-[protein] = an N-terminal L-phenylalanyl-L-alpha-aminoacyl-[protein] + tRNA(Phe). Its function is as follows. Functions in the N-end rule pathway of protein degradation where it conjugates Leu, Phe and, less efficiently, Met from aminoacyl-tRNAs to the N-termini of proteins containing an N-terminal arginine or lysine. In Xanthomonas euvesicatoria pv. vesicatoria (strain 85-10) (Xanthomonas campestris pv. vesicatoria), this protein is Leucyl/phenylalanyl-tRNA--protein transferase.